Here is a 77-residue protein sequence, read N- to C-terminus: Liver-expressed antimicrobial peptide 2 (77 aa).

An N-terminal signal peptide occupies residues 1 to 22; the sequence is MWHLKLCAVLMIFLLLLGQTDG. Residues 23-37 constitute a propeptide that is removed on maturation; the sequence is SPIPEVSSAKRRPRR. Intrachain disulfides connect Cys54/Cys65 and Cys60/Cys70.

Belongs to the LEAP2 family.

The protein resides in the secreted. Has an antimicrobial activity. The polypeptide is Liver-expressed antimicrobial peptide 2 (LEAP2) (Macaca mulatta (Rhesus macaque)).